The primary structure comprises 297 residues: Probable ABC transporter phosphite binding protein PhnD1 (297 aa).

Residues 1-24 (MFNLKYFLVSSSLLFSVFSSPVFS) form the signal peptide.

The protein belongs to the phosphate/phosphite/phosphonate binding protein family. In terms of assembly, the complex may be composed of two ATP-binding proteins (PhnC1), two transmembrane proteins (PhnE1) and a solute-binding protein (PhnD1).

The protein localises to the periplasm. In terms of biological role, probably part of the ABC transporter complex PhnD1C1E1. Binds strongly to inorganic phosphite and with very weak affinities to methylphosphonate (MPn) and phosphate. The polypeptide is Probable ABC transporter phosphite binding protein PhnD1 (Prochlorococcus marinus (strain MIT 9301)).